The primary structure comprises 301 residues: GTPase Era (301 aa).

Positions 4-173 (KAGFVALIGK…LECISKHLNP (170 aa)) constitute an Era-type G domain. The interval 12–19 (GKPNAGKS) is G1. 12–19 (GKPNAGKS) serves as a coordination point for GTP. The G2 stretch occupies residues 38 to 42 (NATRK). The G3 stretch occupies residues 64-67 (DTPG). Residues 64 to 68 (DTPGL) and 122 to 125 (SKID) each bind GTP. Positions 122 to 125 (SKID) are G4. The G5 stretch occupies residues 152-154 (LSA). Residues 204 to 280 (LSDEIPYESD…FLNLQVIAQK (77 aa)) form the KH type-2 domain.

The protein belongs to the TRAFAC class TrmE-Era-EngA-EngB-Septin-like GTPase superfamily. Era GTPase family. In terms of assembly, monomer.

It localises to the cytoplasm. Its subcellular location is the cell inner membrane. Its function is as follows. An essential GTPase that binds both GDP and GTP, with rapid nucleotide exchange. Plays a role in 16S rRNA processing and 30S ribosomal subunit biogenesis and possibly also in cell cycle regulation and energy metabolism. The chain is GTPase Era from Helicobacter pylori (strain P12).